The following is a 453-amino-acid chain: MTTDTIVAQATAPGRGGVGIIRISGDKATDVAMAVLGHLPKTRYADYCDFKNATGQVIDQGIALFFKGPNSFTGEDVLELQGHGGQIVLDMLIKRVLEVEGIRIAKPGEFSEQAFMNDKLDLTQAEAIADLIDATSEQAAKSALQSLQGEFSKEVHELVDQVTNLRLYVEAAIDFPDEEVDFLSDGKIANALYKIIDKLSTVQASAKQGSIIREGMKVVIAGRPNAGKSSLLNALAGKESAIVTEIAGTTRDVLREHIHLDGMPLHIIDTAGLRDTTDTVEQIGIERAWNEINSADRVLFMVDGTTTDAVDPHDIWPDFINRLPANLGVTVIRNKADLTGENLDMTEEKGYSVYRISAKTGLGVDELKLHLKSLMGYQSNLEGGFIARRRHLEALDVAASHLQLGKEQLEVYLAGELLAEELRMAQIALSEITGRFTSDDLLGKIFSSFCIGK.

Residues R22, E79, and K119 each coordinate (6S)-5-formyl-5,6,7,8-tetrahydrofolate. The region spanning 215–376 (GMKVVIAGRP…LKLHLKSLMG (162 aa)) is the TrmE-type G domain. A K(+)-binding site is contributed by N225. GTP is bound by residues 225 to 230 (NAGKSS), 244 to 250 (TEIAGTT), 269 to 272 (DTAG), and 334 to 337 (NKAD). S229 serves as a coordination point for Mg(2+). Positions 244, 246, and 249 each coordinate K(+). A Mg(2+)-binding site is contributed by T250. K453 contributes to the (6S)-5-formyl-5,6,7,8-tetrahydrofolate binding site.

Belongs to the TRAFAC class TrmE-Era-EngA-EngB-Septin-like GTPase superfamily. TrmE GTPase family. As to quaternary structure, homodimer. Heterotetramer of two MnmE and two MnmG subunits. K(+) serves as cofactor.

Its subcellular location is the cytoplasm. In terms of biological role, exhibits a very high intrinsic GTPase hydrolysis rate. Involved in the addition of a carboxymethylaminomethyl (cmnm) group at the wobble position (U34) of certain tRNAs, forming tRNA-cmnm(5)s(2)U34. This Shewanella sp. (strain W3-18-1) protein is tRNA modification GTPase MnmE.